Here is a 73-residue protein sequence, read N- to C-terminus: Large ribosomal subunit protein bL31 (73 aa).

Zn(2+) is bound by residues C16, C18, C36, and C39.

Belongs to the bacterial ribosomal protein bL31 family. Type A subfamily. In terms of assembly, part of the 50S ribosomal subunit. It depends on Zn(2+) as a cofactor.

In terms of biological role, binds the 23S rRNA. This chain is Large ribosomal subunit protein bL31, found in Desulfotalea psychrophila (strain LSv54 / DSM 12343).